We begin with the raw amino-acid sequence, 477 residues long: Homospermidine synthase (477 aa).

This sequence belongs to the saccharopine dehydrogenase family. In terms of assembly, homodimer. Requires NAD(+) as cofactor.

The catalysed reaction is 2 putrescine = sym-homospermidine + NH4(+). It catalyses the reaction putrescine + spermidine = sym-homospermidine + propane-1,3-diamine. Involved in the NAD(+)-dependent synthesis of the polyamine homospermidine from putrescine. The polypeptide is Homospermidine synthase (hss) (Blastochloris viridis (Rhodopseudomonas viridis)).